The primary structure comprises 202 residues: Odorant-binding protein 59a (202 aa).

Residues 1 to 20 (MKQLIFLLICLSCGTCSIYA) form the signal peptide. The span at 43–53 (HRQDEDEDRGR) shows a compositional bias: basic and acidic residues. Positions 43-105 (HRQDEDEDRG…QSDGRNHTSN (63 aa)) are disordered. A compositionally biased stretch (gly residues) spans 54-65 (GGQGRQGNGYEY).

Belongs to the PBP/GOBP family. In terms of tissue distribution, expressed in non-neuronal cells in hygrosensitive sensilla in the second chamber of the sacculus of the antenna third segment (at protein level).

It localises to the secreted. Odorant-binding protein required for hygrotaxis behavior in humidity-detecting sensilla. The protein is Odorant-binding protein 59a of Drosophila melanogaster (Fruit fly).